The sequence spans 156 residues: 3-hydroxyacyl-[acyl-carrier-protein] dehydratase FabZ (156 aa).

His-57 is a catalytic residue.

The protein belongs to the thioester dehydratase family. FabZ subfamily.

The protein resides in the cytoplasm. The enzyme catalyses a (3R)-hydroxyacyl-[ACP] = a (2E)-enoyl-[ACP] + H2O. In terms of biological role, involved in unsaturated fatty acids biosynthesis. Catalyzes the dehydration of short chain beta-hydroxyacyl-ACPs and long chain saturated and unsaturated beta-hydroxyacyl-ACPs. This Anaeromyxobacter dehalogenans (strain 2CP-C) protein is 3-hydroxyacyl-[acyl-carrier-protein] dehydratase FabZ.